The chain runs to 369 residues: Epoxyqueuosine reductase (369 aa).

Asp135 functions as the Proton donor in the catalytic mechanism. One can recognise a 4Fe-4S ferredoxin-type domain in the interval 177-209 (IPLPVDEPSENQCGKCTACITSCPTNAIVAEGV). Residues Cys189, Cys192, Cys195, Cys199, Cys215, Cys242, Cys245, and Cys249 each coordinate [4Fe-4S] cluster.

Belongs to the QueG family. In terms of assembly, monomer. The cofactor is cob(II)alamin. It depends on [4Fe-4S] cluster as a cofactor.

It localises to the cytoplasm. The enzyme catalyses epoxyqueuosine(34) in tRNA + AH2 = queuosine(34) in tRNA + A + H2O. Its pathway is tRNA modification; tRNA-queuosine biosynthesis. Functionally, catalyzes the conversion of epoxyqueuosine (oQ) to queuosine (Q), which is a hypermodified base found in the wobble positions of tRNA(Asp), tRNA(Asn), tRNA(His) and tRNA(Tyr). The chain is Epoxyqueuosine reductase from Vibrio cholerae serotype O1 (strain ATCC 39315 / El Tor Inaba N16961).